The chain runs to 385 residues: Alanine racemase (385 aa).

Catalysis depends on lysine 40, which acts as the Proton acceptor; specific for D-alanine. An N6-(pyridoxal phosphate)lysine modification is found at lysine 40. Position 139 (arginine 139) interacts with substrate. Catalysis depends on tyrosine 268, which acts as the Proton acceptor; specific for L-alanine. Methionine 315 contacts substrate.

This sequence belongs to the alanine racemase family. It depends on pyridoxal 5'-phosphate as a cofactor.

It carries out the reaction L-alanine = D-alanine. Its pathway is amino-acid biosynthesis; D-alanine biosynthesis; D-alanine from L-alanine: step 1/1. In terms of biological role, catalyzes the interconversion of L-alanine and D-alanine. May also act on other amino acids. The chain is Alanine racemase (alr) from Anoxybacillus flavithermus (strain DSM 21510 / WK1).